The sequence spans 726 residues: MAAPGGRGRSLSGLLPAQTSLEYALLDAVTQQEKDSLVYQYLQKVDGWEQDLSVPEFPEGLEWLNTEEPISVYKDLCGKIVVLDFFTYCCINCIHLLPDLHALEHTYSDKDGLLIIGVHSAKFPNEKVLDNIKSAVLRYNITHPMVNDADASLWQELEVSCWPTLVILGPRGNMLFSLIGEGHKDKLFLYTSIALKYYKDRGQIRDNKIGIKLYKDSLPPSPLLFPGKVTVDQVTDRLVIADTGHHRILVVWKNGQIQYSIGGPNPGRKDGIFSESTFNSPQGVAIMNNIIYVADTENHLIRKIDLEAEKVSTVAGIGIQGTDKEGGAKGEQQPISSPWDVVFGTSGSEVQRGDILWIAMAGTHQIWALLLDSGKLPKKNELTKGTCLRFAGSGNEENRNNAYPHKAGFAQPSGLSLASEDPWSCLFVADSESSTVRTVSLKDGAVKHLVGGERDPMNLFAFGDVDGVGINAKLQHPLGVTWDKKRNLLYVADSYNHKIKVVDPKTKNCTTLAGTGDTNNVTSSSFTESTFNEPGGLCIGENGELLYVADTNNHQIKVMDLETKMVSVLPIFRSENAVVDGPFLVEKQKTLPKLPKSAPSIRLSPVTACAGQTLQFKLRLDLPSGSKLTEGVSSCWFLTAEGNEWLLQGQIAAGDIENISSQPTISLQIPDDCLSLEAIVSVSVFLYYCSADSSACMMKAILFSQPLQITDTQQGCIAPVELRYVF.

The 158-residue stretch at 43–200 folds into the Thioredoxin domain; the sequence is QKVDGWEQDL…TSIALKYYKD (158 aa). NHL repeat units follow at residues 212–254, 265–307, 335–369, 409–439, 461–505, and 518–562; these read KLYK…VWKN, NPGR…IDLE, ISSP…IWAL, FAQP…VRTV, AFGD…VDPK, and TNNV…MDLE.

Monomer. As to expression, ubiquitous. Detected in heart, kidney, muscle, brain, lung, liver and in skin fibroblasts (at protein level).

The protein localises to the cytoplasm. It localises to the cytosol. Required for normal embryonic development. This Homo sapiens (Human) protein is NHL repeat-containing protein 2 (NHLRC2).